The chain runs to 55 residues: Large ribosomal subunit protein bL33 (55 aa).

The protein belongs to the bacterial ribosomal protein bL33 family.

This is Large ribosomal subunit protein bL33 from Roseobacter denitrificans (strain ATCC 33942 / OCh 114) (Erythrobacter sp. (strain OCh 114)).